The chain runs to 270 residues: Phosphatidylglycerol--prolipoprotein diacylglyceryl transferase (270 aa).

4 helical membrane passes run 19–39 (FPVY…LWLA), 56–76 (LVLI…VIFE), 92–112 (QGGL…VLFA), and 116–136 (GLSF…GQAI). Arginine 138 contributes to the a 1,2-diacyl-sn-glycero-3-phospho-(1'-sn-glycerol) binding site. The next 3 helical transmembrane spans lie at 178-198 (HPTF…LLAL), 206-226 (GELF…VEGL), and 236-256 (LRIA…FIIV).

The protein belongs to the Lgt family.

It is found in the cell membrane. The enzyme catalyses L-cysteinyl-[prolipoprotein] + a 1,2-diacyl-sn-glycero-3-phospho-(1'-sn-glycerol) = an S-1,2-diacyl-sn-glyceryl-L-cysteinyl-[prolipoprotein] + sn-glycerol 1-phosphate + H(+). Its pathway is protein modification; lipoprotein biosynthesis (diacylglyceryl transfer). Catalyzes the transfer of the diacylglyceryl group from phosphatidylglycerol to the sulfhydryl group of the N-terminal cysteine of a prolipoprotein, the first step in the formation of mature lipoproteins. In Bacillus cereus (strain ATCC 14579 / DSM 31 / CCUG 7414 / JCM 2152 / NBRC 15305 / NCIMB 9373 / NCTC 2599 / NRRL B-3711), this protein is Phosphatidylglycerol--prolipoprotein diacylglyceryl transferase.